Consider the following 367-residue polypeptide: uncharacterized protein (367 aa).

4 consecutive transmembrane segments (helical) span residues 18 to 38 (ILAL…GILG), 239 to 259 (VSYF…IGIG), 296 to 316 (ILGV…GYLI), and 329 to 349 (AIFY…ISAL).

It belongs to the ABC-4 integral membrane protein family.

It is found in the cell membrane. This is an uncharacterized protein from Methanocaldococcus jannaschii (strain ATCC 43067 / DSM 2661 / JAL-1 / JCM 10045 / NBRC 100440) (Methanococcus jannaschii).